Reading from the N-terminus, the 145-residue chain is MFSLLKPKGAAKRRKIVGRGPGSGLGKTSGRGQKGQKARNTSPRLGFEGGQTPLYRRLPRKGFSNNDYKLEYAIVNLGDIDKKFNDGQVVNYDTLLENKLIRKKNKKIKILSNGKLTKKVSLEVSKISKTAESLVMKIGGTIKLV.

The tract at residues 1–58 is disordered; sequence MFSLLKPKGAAKRRKIVGRGPGSGLGKTSGRGQKGQKARNTSPRLGFEGGQTPLYRRL. Residues 19–33 show a composition bias toward gly residues; it reads RGPGSGLGKTSGRGQ.

This sequence belongs to the universal ribosomal protein uL15 family. In terms of assembly, part of the 50S ribosomal subunit.

Functionally, binds to the 23S rRNA. This Borreliella afzelii (strain PKo) (Borrelia afzelii) protein is Large ribosomal subunit protein uL15.